The chain runs to 223 residues: Transmembrane protein 235 (223 aa).

An N-terminal signal peptide occupies residues 1-28 (MARLGALLLAAALGALLSFALLAAAVAS). Asn41 carries N-linked (GlcNAc...) asparagine glycosylation. 3 helical membrane-spanning segments follow: residues 96-116 (VIVVLPLSLVLLVCGWICGLL), 126-146 (LLFTGCYFLLGSVLTLAGVSI), and 176-196 (WSMALAWGSCALEAFSGTLLL).

It belongs to the PMP-22/EMP/MP20 family. Post-translationally, N-glycosylated.

It localises to the membrane. It is found in the endoplasmic reticulum. In Homo sapiens (Human), this protein is Transmembrane protein 235 (TMEM235).